The following is a 103-amino-acid chain: Large ribosomal subunit protein eL14 (103 aa).

It belongs to the eukaryotic ribosomal protein eL14 family.

In Ignicoccus hospitalis (strain KIN4/I / DSM 18386 / JCM 14125), this protein is Large ribosomal subunit protein eL14.